Consider the following 602-residue polypeptide: Raftlin (602 aa).

G2 is lipidated: N-myristoyl glycine. A lipid anchor (S-palmitoyl cysteine) is attached at C3. Positions 178-195 (TPASNNSVQSRDNKNVSN) are enriched in polar residues. 3 disordered regions span residues 178–282 (TPAS…RCSK), 451–495 (KKES…EVTE), and 524–567 (NETA…QSAP). 2 stretches are compositionally biased toward basic and acidic residues: residues 197 to 209 (PEDH…EKID) and 244 to 265 (PDCK…REAP). Over residues 468 to 477 (KPMKKSRKTK) the composition is skewed to basic residues.

The protein belongs to the raftlin family.

It is found in the cell membrane. In terms of biological role, may play a pivotal role in the formation and/or maintenance of lipid rafts. May regulate B-cell antigen receptor-mediated signaling. The protein is Raftlin (RFTN1) of Gallus gallus (Chicken).